The chain runs to 297 residues: 4,5-DOPA dioxygenase extradiol-like protein (297 aa).

Histidine 30, histidine 82, histidine 205, and histidine 263 together coordinate Zn(2+).

Belongs to the DODA-type extradiol aromatic ring-opening dioxygenase family. Zn(2+) serves as cofactor.

The protein resides in the cytoplasm. It localises to the nucleus. In terms of biological role, may be involved in the metabolism of aromatic compounds. The protein is 4,5-DOPA dioxygenase extradiol-like protein of Schizosaccharomyces pombe (strain 972 / ATCC 24843) (Fission yeast).